The chain runs to 244 residues: Small ribosomal subunit protein eS4 (244 aa).

In terms of domain architecture, S4 RNA-binding spans 43-106 (LPLLLVVRDV…DENYLVLFDE (64 aa)).

The protein belongs to the eukaryotic ribosomal protein eS4 family.

The chain is Small ribosomal subunit protein eS4 from Methanococcus maripaludis (strain C7 / ATCC BAA-1331).